The sequence spans 102 residues: FMRFamide-like neuropeptides 9 (102 aa).

A signal peptide spans 1 to 19 (MNQFYALFLVACIAAMANA). Residues 20–63 (YEEPDLDALAEFCGKESNRKYCDQIAQLATQHAIGINQEQVRME) constitute a propeptide that is removed on maturation. Residue F72 is modified to Phenylalanine amide. Residues 75–90 (RSGYPLVIDDEEMRMD) constitute a propeptide that is removed on maturation. At F99 the chain carries Phenylalanine amide.

It belongs to the FARP (FMRFamide related peptide) family. In terms of tissue distribution, each flp gene is expressed in a distinct set of neurons.

It localises to the secreted. Functionally, FMRFamides and FMRFamide-like peptides are neuropeptides. Its function is as follows. KPSFVRF-amide: Has no effect on somatic body wall muscle, inhibits contraction of vaginal vera muscle, and inhibits the activity of the dissected pharyngeal myogenic muscle system. Acts as a ligand for the npr-22 receptor in vitro. The chain is FMRFamide-like neuropeptides 9 from Caenorhabditis elegans.